A 291-amino-acid chain; its full sequence is 4-hydroxy-tetrahydrodipicolinate synthase (291 aa).

Residue threonine 44 coordinates pyruvate. The active-site Proton donor/acceptor is tyrosine 132. The active-site Schiff-base intermediate with substrate is the lysine 160. Isoleucine 202 is a binding site for pyruvate.

It belongs to the DapA family. Homotetramer; dimer of dimers.

The protein localises to the cytoplasm. The enzyme catalyses L-aspartate 4-semialdehyde + pyruvate = (2S,4S)-4-hydroxy-2,3,4,5-tetrahydrodipicolinate + H2O + H(+). It functions in the pathway amino-acid biosynthesis; L-lysine biosynthesis via DAP pathway; (S)-tetrahydrodipicolinate from L-aspartate: step 3/4. Catalyzes the condensation of (S)-aspartate-beta-semialdehyde [(S)-ASA] and pyruvate to 4-hydroxy-tetrahydrodipicolinate (HTPA). The sequence is that of 4-hydroxy-tetrahydrodipicolinate synthase from Thermodesulfovibrio yellowstonii (strain ATCC 51303 / DSM 11347 / YP87).